The primary structure comprises 296 residues: Glycerol-3-phosphate dehydrogenase [NAD(P)+] (296 aa).

NADPH-binding residues include Trp12, Arg31, and Lys80. The sn-glycerol 3-phosphate site is built by Lys80, Gly108, and Ser110. Ala112 serves as a coordination point for NADPH. Sn-glycerol 3-phosphate contacts are provided by Lys162, Asp215, Ser225, Arg226, and Asn227. Lys162 acts as the Proton acceptor in catalysis. Arg226 provides a ligand contact to NADPH. Residues Val250 and Glu252 each contribute to the NADPH site.

This sequence belongs to the NAD-dependent glycerol-3-phosphate dehydrogenase family.

The protein resides in the cytoplasm. It carries out the reaction sn-glycerol 3-phosphate + NAD(+) = dihydroxyacetone phosphate + NADH + H(+). It catalyses the reaction sn-glycerol 3-phosphate + NADP(+) = dihydroxyacetone phosphate + NADPH + H(+). It participates in membrane lipid metabolism; glycerophospholipid metabolism. Its function is as follows. Catalyzes the reduction of the glycolytic intermediate dihydroxyacetone phosphate (DHAP) to sn-glycerol 3-phosphate (G3P), the key precursor for phospholipid synthesis. This chain is Glycerol-3-phosphate dehydrogenase [NAD(P)+], found in Sulfurimonas denitrificans (strain ATCC 33889 / DSM 1251) (Thiomicrospira denitrificans (strain ATCC 33889 / DSM 1251)).